Reading from the N-terminus, the 475-residue chain is Polyphosphate:AMP phosphotransferase (475 aa).

PPK2 regions lie at residues Leu-18–Leu-222 and Ala-256–Arg-472.

The protein belongs to the polyphosphate kinase 2 (PPK2) family. Class II subfamily. As to quaternary structure, homodimer and homotetramer. Requires Mg(2+) as cofactor.

It carries out the reaction [phosphate](n) + ADP = [phosphate](n+1) + AMP. Its function is as follows. Uses inorganic polyphosphate (polyP) as a donor to convert AMP to ADP. Can also use GMP, UMP, CMP, TMP or deoxyribonucleoside monophosphates, with lower efficiency. Cannot use low-molecular weight polyP as donors. Can also catalyze the synthesis of polyP from ADP or GDP, with lower efficiency. The protein is Polyphosphate:AMP phosphotransferase of Acinetobacter johnsonii.